A 400-amino-acid chain; its full sequence is Nicotinate phosphoribosyltransferase (400 aa).

H220 carries the post-translational modification Phosphohistidine; by autocatalysis.

The protein belongs to the NAPRTase family. In terms of processing, transiently phosphorylated on a His residue during the reaction cycle. Phosphorylation strongly increases the affinity for substrates and increases the rate of nicotinate D-ribonucleotide production. Dephosphorylation regenerates the low-affinity form of the enzyme, leading to product release.

It catalyses the reaction nicotinate + 5-phospho-alpha-D-ribose 1-diphosphate + ATP + H2O = nicotinate beta-D-ribonucleotide + ADP + phosphate + diphosphate. It functions in the pathway cofactor biosynthesis; NAD(+) biosynthesis; nicotinate D-ribonucleotide from nicotinate: step 1/1. Its function is as follows. Catalyzes the synthesis of beta-nicotinate D-ribonucleotide from nicotinate and 5-phospho-D-ribose 1-phosphate at the expense of ATP. This chain is Nicotinate phosphoribosyltransferase, found in Escherichia coli O157:H7.